A 121-amino-acid polypeptide reads, in one-letter code: Large ribosomal subunit protein uL14 (121 aa).

This sequence belongs to the universal ribosomal protein uL14 family. In terms of assembly, part of the 50S ribosomal subunit. Forms a cluster with proteins L3 and L19. In the 70S ribosome, L14 and L19 interact and together make contacts with the 16S rRNA in bridges B5 and B8.

Its function is as follows. Binds to 23S rRNA. Forms part of two intersubunit bridges in the 70S ribosome. The protein is Large ribosomal subunit protein uL14 of Prochlorococcus marinus (strain MIT 9303).